The primary structure comprises 217 residues: Thiosulfate dehydrogenase electron acceptor (217 aa).

The signal sequence occupies residues 1–28; sequence MRQFIPMRRVLAVATLGALFWAAPASWA. Cytochrome c domains are found at residues 29–104 and 116–206; these read AAPP…SKLK and AAAA…AAQP. Heme c-binding residues include C37, C40, H41, C137, C140, and H141.

Binds 2 heme c groups covalently per subunit.

In terms of biological role, acts as an electron acceptor for the thiosulfate dehydrogenase TsdA. The protein is Thiosulfate dehydrogenase electron acceptor (tsdB) of Thiomonas intermedia (strain K12) (Thiobacillus intermedius).